The following is a 70-amino-acid chain: Conotoxin Mr3.8 (70 aa).

The signal sequence occupies residues 1–24 (MLKMGVVLFIFLVLFPLATLQLDA). Residues 25–54 (DQPVERYAKNKQLFNPHKRRGIILRAPGKR) constitute a propeptide that is removed on maturation. 3 disulfide bridges follow: C55–C67, C56–C68, and C61–C65.

Belongs to the conotoxin M superfamily. Expressed by the venom duct.

Its subcellular location is the secreted. In terms of biological role, in vitro, inhibits proliferation of the mice ovarian cancer cells ID8. The polypeptide is Conotoxin Mr3.8 (Conus marmoreus (Marble cone)).